The chain runs to 29 residues: Dermaseptin-1 (29 aa).

V29 carries the valine amide modification.

As to expression, expressed by the skin glands.

The protein localises to the secreted. Antimicrobial peptide, active against the Gram-positive bacterium S.aureus, the Gram-negative bacteria E.coli and P.aeruginosa, and the yeasts C.albicans and P.brasiliensis. Has hemolytic activity (40% hemolysis at 128 ug/ml). The chain is Dermaseptin-1 from Phyllomedusa tarsius (Brownbelly leaf frog).